The chain runs to 632 residues: Probable potassium transport system protein Kup 3 (632 aa).

The next 12 helical transmembrane spans lie at 17–37 (LFYLALGSVGVVYGDIGTSPL), 60–80 (LISLMIWALTIIVTIKYVLFL), 106–126 (TAILMLLGLMGAALFLGDAMI), 144–164 (PSLSDYIVPISVVILALLFVV), 175–195 (FFGPITAVWFLVMAAAGISHI), 210–230 (AVSFLLHEGFYGVVVLGAVFL), 254–274 (WFLLVFPALTLNYLGQGALVL), 292–312 (ALLPVVILATAATIIASQAVI), 344–364 (IFVPSVNAVLFIGVIFLVLSF), 370–390 (LATAYGISVTGAMVVTSIMAF), 401–421 (LPLAVVALAPLVVLELIFLGA), and 426–446 (IHDGGYIPILIATAFTVIMWT).

This sequence belongs to the HAK/KUP transporter (TC 2.A.72) family.

It localises to the cell inner membrane. The catalysed reaction is K(+)(in) + H(+)(in) = K(+)(out) + H(+)(out). Functionally, transport of potassium into the cell. Likely operates as a K(+):H(+) symporter. The protein is Probable potassium transport system protein Kup 3 of Rhizobium etli (strain ATCC 51251 / DSM 11541 / JCM 21823 / NBRC 15573 / CFN 42).